A 1032-amino-acid polypeptide reads, in one-letter code: Leucine-rich repeat and coiled-coil domain-containing protein 1 (1032 aa).

LRR repeat units lie at residues 44–65 (TLHA…DHIW), 66–87 (NLQH…NTLT), 88–109 (KLCT…EELI), 110–131 (NLTR…IPLH), and 136–157 (KLRY…LQCM). Positions 175–218 (NPVCRLPGYRAVILQTLPQLRILDCKNIFGEPVNLTEINSSQLQ) constitute an LRRCT domain. Positions 316 to 345 (DNVLEKDPRPKRDTDITSESDYGNRKECNR) are disordered. The segment covering 318-330 (VLEKDPRPKRDTD) has biased composition (basic and acidic residues). Residues 421–647 (NTYQSLVEQL…DLENEFRIAL (227 aa)) are a coiled coil.

It belongs to the LRRCC1 family.

It localises to the cytoplasm. The protein resides in the cytoskeleton. The protein localises to the microtubule organizing center. Its subcellular location is the centrosome. It is found in the centriole. Functionally, required for the organization of the mitotic spindle. Maintains the structural integrity of centrosomes during mitosis. In Homo sapiens (Human), this protein is Leucine-rich repeat and coiled-coil domain-containing protein 1 (LRRCC1).